A 162-amino-acid polypeptide reads, in one-letter code: UPF0262 protein Pden_1958 (162 aa).

Positions 1-22 (MSQSANRLCRIDIDDSALPPPS) are disordered.

Belongs to the UPF0262 family.

In Paracoccus denitrificans (strain Pd 1222), this protein is UPF0262 protein Pden_1958.